Reading from the N-terminus, the 313-residue chain is Ribonuclease HIII (313 aa).

Positions 63-85 are disordered; it reads ARWGTAEPQEKKKTAKKPADPRY. Basic and acidic residues predominate over residues 70–82; that stretch reads PQEKKKTAKKPAD. Residues 94–310 form the RNase H type-2 domain; it reads MSVIGSDEVG…TQKAQRLADK (217 aa). A divalent metal cation contacts are provided by aspartate 100, glutamate 101, and aspartate 205.

Belongs to the RNase HII family. RnhC subfamily. As to quaternary structure, interacts with the RNA polymerase core. It depends on Mn(2+) as a cofactor. Mg(2+) is required as a cofactor.

It localises to the cytoplasm. It catalyses the reaction Endonucleolytic cleavage to 5'-phosphomonoester.. Its function is as follows. Endonuclease that specifically degrades the RNA of RNA-DNA hybrids. This chain is Ribonuclease HIII (rnhC), found in Bacillus subtilis (strain 168).